The sequence spans 407 residues: SERPINE1 mRNA-binding protein 1 (407 aa).

Position 25 is a phosphoserine (S25). The interval 33 to 227 is disordered; that stretch reads AAENKKKEAG…GSGSHNWGTV (195 aa). Over residues 51-68 the composition is skewed to low complexity; that stretch reads AKSAAQAAAQTNSNAAGK. K52 carries the post-translational modification N6-acetyllysine; alternate. K52 participates in a covalent cross-link: Glycyl lysine isopeptide (Lys-Gly) (interchain with G-Cter in SUMO1); alternate. An N6-acetyllysine modification is found at K68. 3 stretches are compositionally biased toward basic and acidic residues: residues 70–80, 89–114, and 122–162; these read LRKESQKDRKN, ADKKEETQPPVALKKEGIRRVGRRPD, and KLID…ERPI. K102 is covalently cross-linked (Glycyl lysine isopeptide (Lys-Gly) (interchain with G-Cter in SUMO2)). N6-acetyllysine occurs at positions 122 and 140. The span at 164 to 182 shows a compositional bias: gly residues; it reads GRGGLGRGRGGRGRGMGRG. Omega-N-methylarginine is present on residues R165 and R188. The segment covering 183 to 199 has biased composition (basic and acidic residues); that stretch reads DGFDSRGKREFDRHSGS. Phosphoserine is present on residues S197, S199, S203, S205, and S208. K211 carries the N6-acetyllysine; alternate modification. K211 participates in a covalent cross-link: Glycyl lysine isopeptide (Lys-Gly) (interchain with G-Cter in SUMO2); alternate. Omega-N-methylarginine is present on R216. The residue at position 221 (S221) is a Phosphoserine. Phosphothreonine is present on T226. A Glycyl lysine isopeptide (Lys-Gly) (interchain with G-Cter in SUMO1); alternate cross-link involves residue K228. A Glycyl lysine isopeptide (Lys-Gly) (interchain with G-Cter in SUMO2); alternate cross-link involves residue K228. Phosphoserine occurs at positions 231, 234, and 237. A Phosphothreonine modification is found at S234. Phosphothreonine is present on K240. A compositionally biased stretch (polar residues) spans 242-256; sequence ISYNCSDLDQSNVTE. Disordered regions lie at residues 242–288 and 327–407; these read ISYN…KEMT and SKSE…PALA. A compositionally biased stretch (basic and acidic residues) spans 261 to 274; that stretch reads GEEHPVADTENKEN. Residue K280 forms a Glycyl lysine isopeptide (Lys-Gly) (interchain with G-Cter in SUMO2) linkage. Over residues 327 to 341 the composition is skewed to basic and acidic residues; sequence SKSEEAHAEDSVMDH. K328 carries the post-translational modification N6-acetyllysine. S329 is modified (phosphoserine). Residues 362–371 show a composition bias toward gly residues; the sequence is GRPGRGGRGG. Residues R363, R366, and R369 each carry the omega-N-methylarginine modification. Phosphoserine occurs at positions 391 and 393.

The protein belongs to the SERBP1-HABP4 family. In terms of assembly, associates with mature 80S ribosomes. Interacts with EEF2/eEF2; interaction sequesters EEF2/eEF2 at the A-site of the ribosome, thereby blocking the interaction sites of the mRNA-tRNA complex, promoting ribosome stabilization and hibernation. Interacts with SPIN1. Interacts with CHD3 and TDRD3. Interacts with ZDHHC17 (via ANK repeats). Phosphorylation by MTOR inhibits SERBP1 and relieves ribosome hibernation.

Its subcellular location is the cytoplasm. The protein localises to the nucleus. It is found in the perinuclear region. Ribosome-binding protein that promotes ribosome hibernation, a process during which ribosomes are stabilized in an inactive state and preserved from proteasomal degradation. Acts via its association with EEF2/eEF2 factor, sequestering EEF2/eEF2 at the A-site of the ribosome and promoting ribosome stabilization and storage in an inactive state. May also play a role in the regulation of mRNA stability: binds to the 3'-most 134 nt of the SERPINE1/PAI1 mRNA, a region which confers cyclic nucleotide regulation of message decay. Seems to play a role in PML-nuclear bodies formation. This chain is SERPINE1 mRNA-binding protein 1, found in Mus musculus (Mouse).